Reading from the N-terminus, the 347-residue chain is tRNA N6-adenosine threonylcarbamoyltransferase (347 aa).

Fe cation-binding residues include His117 and His121. Residues 140-144, Asp174, Gly187, Asp191, and Asn281 each bind substrate; that span reads LVSGG. Residue Asp309 coordinates Fe cation.

The protein belongs to the KAE1 / TsaD family. Fe(2+) serves as cofactor.

The protein resides in the cytoplasm. It catalyses the reaction L-threonylcarbamoyladenylate + adenosine(37) in tRNA = N(6)-L-threonylcarbamoyladenosine(37) in tRNA + AMP + H(+). Functionally, required for the formation of a threonylcarbamoyl group on adenosine at position 37 (t(6)A37) in tRNAs that read codons beginning with adenine. Is involved in the transfer of the threonylcarbamoyl moiety of threonylcarbamoyl-AMP (TC-AMP) to the N6 group of A37, together with TsaE and TsaB. TsaD likely plays a direct catalytic role in this reaction. The sequence is that of tRNA N6-adenosine threonylcarbamoyltransferase from Thermobifida fusca (strain YX).